The chain runs to 388 residues: MNLHEYQAKQLFAEFGLPIPEGYACDTPQEAFEAAGRISTAKKVVKCQVHAGGRGKAGGVELHDTKEGVKEFAQKWLGKNLVTYQTDANGQPVTKILVEEASNIANELYLGAVVDRATRKVVFMASTEGGVEIEKVAEETPELIHKAAIDPLVGPQAYQGRELAFKLGLQGDQIKQFVKIFMGLGEMFTQYDLALLEINPLVITGEGNLLCLDGKINIDSNALYRQPKLREMHDPSQEDKREAHAAQWELNYVALDGNVGCMVNGAGLAMGTMDIVNLHGGKPANFLDVGGGATKERVAEAFKIILSDDNVKAVLVNIFGGIVRCDMIAEGIIGAVKEVGVSVPVVVRLEGTNADLGRKVLAESGLDIIAAESLTDAAQKVVAAAEGK.

An ATP-grasp domain is found at K9–H244. ATP-binding positions include K46, G53–G55, E99, S102, and E107. Mg(2+) contacts are provided by N199 and D213. Substrate contacts are provided by residues N264 and G321–V323.

It belongs to the succinate/malate CoA ligase beta subunit family. Heterotetramer of two alpha and two beta subunits. The cofactor is Mg(2+).

The enzyme catalyses succinate + ATP + CoA = succinyl-CoA + ADP + phosphate. It carries out the reaction GTP + succinate + CoA = succinyl-CoA + GDP + phosphate. It participates in carbohydrate metabolism; tricarboxylic acid cycle; succinate from succinyl-CoA (ligase route): step 1/1. Succinyl-CoA synthetase functions in the citric acid cycle (TCA), coupling the hydrolysis of succinyl-CoA to the synthesis of either ATP or GTP and thus represents the only step of substrate-level phosphorylation in the TCA. The beta subunit provides nucleotide specificity of the enzyme and binds the substrate succinate, while the binding sites for coenzyme A and phosphate are found in the alpha subunit. This is Succinate--CoA ligase [ADP-forming] subunit beta from Vibrio vulnificus (strain YJ016).